We begin with the raw amino-acid sequence, 181 residues long: Nucleoside diphosphate kinase, mitochondrial (181 aa).

Residues 1–10 show a composition bias toward basic residues; it reads MFRGGTHRLR. A disordered region spans residues 1–22; it reads MFRGGTHRLRGQPGLSLPHGPR. The N-terminal 24 residues, 1–24, are a transit peptide targeting the mitochondrion; sequence MFRGGTHRLRGQPGLSLPHGPRCY. Positions 40, 88, 116, 122, 133, and 143 each coordinate ATP. His146 serves as the catalytic Pros-phosphohistidine intermediate.

Belongs to the NDK family. Requires Mg(2+) as cofactor. In terms of tissue distribution, highest levels in the liver and kidney with lower levels in the heart, brain and breast muscle.

It localises to the mitochondrion intermembrane space. The protein localises to the mitochondrion matrix. It catalyses the reaction a 2'-deoxyribonucleoside 5'-diphosphate + ATP = a 2'-deoxyribonucleoside 5'-triphosphate + ADP. The enzyme catalyses a ribonucleoside 5'-diphosphate + ATP = a ribonucleoside 5'-triphosphate + ADP. Feedback inhibition by ADP. Its function is as follows. Major role in the synthesis of nucleoside triphosphates other than ATP. The ATP gamma phosphate is transferred to the NDP beta phosphate via a ping-pong mechanism, using a phosphorylated active-site intermediate. Through the catalyzed exchange of gamma-phosphate between di- and triphosphonucleosides participates in regulation of intracellular nucleotide homeostasis. Binds to anionic phospholipids, predominantly to cardiolipin; the binding inhibits its phosphotransfer activity. Acts as a mitochondria-specific NDK coupled to respiration. Promotes the redistribution of cardiolipin between the mitochondrial inner membrane and outer membrane which is implicated in pro-apoptotic signaling. The polypeptide is Nucleoside diphosphate kinase, mitochondrial (NME4) (Columba livia (Rock dove)).